We begin with the raw amino-acid sequence, 1071 residues long: Ubiquitin carboxyl-terminal hydrolase 7 (1071 aa).

The tract at residues 467 to 532 (KARLQQEQQQ…MPTTPEIPPP (66 aa)) is disordered. Over residues 471-480 (QQEQQQQQQQ) the composition is skewed to low complexity. Polar residues predominate over residues 481 to 495 (PDSQDSFSAKESSTK). Pro residues-rich tracts occupy residues 497 to 507 (PEPPSWKPPDL) and 516 to 532 (PPPP…IPPP). Residues 609–1069 (TGLRNLGNTC…DVYVLFYERV (461 aa)) enclose the USP domain. Cys-618 functions as the Nucleophile in the catalytic mechanism. Residues 913–942 (RMLGGSGKRSSSSTPFSTGGNDSNNSSDYK) form a disordered region. The segment covering 920–932 (KRSSSSTPFSTGG) has biased composition (polar residues). His-1014 functions as the Proton acceptor in the catalytic mechanism.

This sequence belongs to the peptidase C19 family.

It localises to the cytoplasm. The catalysed reaction is Thiol-dependent hydrolysis of ester, thioester, amide, peptide and isopeptide bonds formed by the C-terminal Gly of ubiquitin (a 76-residue protein attached to proteins as an intracellular targeting signal).. Involved in the sorting of ubiquitinated cargo proteins at the multivesicular body (MVB). The chain is Ubiquitin carboxyl-terminal hydrolase 7 (UBP7) from Saccharomyces cerevisiae (strain ATCC 204508 / S288c) (Baker's yeast).